A 272-amino-acid chain; its full sequence is Ribosomal RNA small subunit methyltransferase A (272 aa).

Positions 20, 22, 47, 68, 93, and 114 each coordinate S-adenosyl-L-methionine.

It belongs to the class I-like SAM-binding methyltransferase superfamily. rRNA adenine N(6)-methyltransferase family. RsmA subfamily.

It localises to the cytoplasm. It carries out the reaction adenosine(1518)/adenosine(1519) in 16S rRNA + 4 S-adenosyl-L-methionine = N(6)-dimethyladenosine(1518)/N(6)-dimethyladenosine(1519) in 16S rRNA + 4 S-adenosyl-L-homocysteine + 4 H(+). Functionally, specifically dimethylates two adjacent adenosines (A1518 and A1519) in the loop of a conserved hairpin near the 3'-end of 16S rRNA in the 30S particle. May play a critical role in biogenesis of 30S subunits. The chain is Ribosomal RNA small subunit methyltransferase A from Aliivibrio fischeri (strain ATCC 700601 / ES114) (Vibrio fischeri).